A 708-amino-acid chain; its full sequence is Metal-pseudopaline receptor CntO (708 aa).

The signal sequence occupies residues 1–21 (MRVSVSLVLGVGLGCSSPALW). The region spanning 63-169 (RIEDIPQAIS…PGGTVNLVTK (107 aa)) is the TBDR plug domain. The TBDR beta-barrel domain maps to 174–708 (ERFARLHASA…NLTMSLTLNY (535 aa)).

Belongs to the TonB-dependent receptor family.

The protein localises to the cell outer membrane. Its function is as follows. Transports the metallophore pseudopaline, which is involved in the acquisition of nickel and zinc, and thus enables bacterial growth inside the host, where metal access is limited. Is probably involved in the import of pseudopaline-metal complexes. The sequence is that of Metal-pseudopaline receptor CntO from Pseudomonas aeruginosa (strain UCBPP-PA14).